The following is a 315-amino-acid chain: Adenine deaminase (315 aa).

Positions 14, 16, and 194 each coordinate Zn(2+). Glu-197 acts as the Proton donor in catalysis. Asp-275 is a Zn(2+) binding site. A substrate-binding site is contributed by Asp-276.

Belongs to the metallo-dependent hydrolases superfamily. Adenosine and AMP deaminases family. Adenine deaminase type 2 subfamily. Zn(2+) serves as cofactor.

It carries out the reaction adenine + H2O + H(+) = hypoxanthine + NH4(+). Functionally, catalyzes the hydrolytic deamination of adenine to hypoxanthine. Plays an important role in the purine salvage pathway and in nitrogen catabolism. The polypeptide is Adenine deaminase (Pseudomonas putida (strain GB-1)).